The primary structure comprises 279 residues: Proto-oncogene FRAT1 (279 aa).

Disordered regions lie at residues 1 to 24 (MPCRREEEEEAGEEAEGEEEEEDS) and 56 to 76 (AQHSPASPCGPPGAPLRAPGP). The segment covering 7-24 (EEEEAGEEAEGEEEEEDS) has biased composition (acidic residues). Ser88 is subject to Phosphoserine. 2 disordered regions span residues 136–200 (GPSA…DDPH) and 228–279 (RAKL…VPGS). An involved in GSK-3 binding region spans residues 198 to 220 (DPHRLLQQLVLSGNLIKEAVRRL). Ser249 and Ser252 each carry phosphoserine.

This sequence belongs to the GSK-3-binding protein family. As to quaternary structure, binds DVL1. Binds GSK-3 and prevent GSK-3-dependent phosphorylation. Post-translationally, phosphorylated.

It localises to the cytoplasm. In terms of biological role, positively regulates the Wnt signaling pathway by stabilizing beta-catenin through the association with GSK-3. May play a role in tumor progression and collaborate with PIM1 and MYC in lymphomagenesis. The sequence is that of Proto-oncogene FRAT1 (FRAT1) from Homo sapiens (Human).